We begin with the raw amino-acid sequence, 204 residues long: Salt stress root protein RS1 (204 aa).

Positions 128–204 (FVPKEEPKPE…AAPAAEPEKQ (77 aa)) are disordered. A compositionally biased stretch (basic and acidic residues) spans 147–161 (TSREVAVEEEKKEEE). A compositionally biased stretch (low complexity) spans 164 to 180 (PAEPAAAAAEAAAPSTE). A compositionally biased stretch (basic and acidic residues) spans 182-192 (VEEKKEEEKPA). Residues 193–204 (EAAAPAAEPEKQ) show a composition bias toward low complexity.

This sequence belongs to the DREPP family.

The protein is Salt stress root protein RS1 of Oryza sativa subsp. indica (Rice).